The sequence spans 176 residues: NAD(P)H-quinone oxidoreductase subunit 6, chloroplastic (176 aa).

5 consecutive transmembrane segments (helical) span residues 10 to 30, 32 to 52, 61 to 81, 92 to 112, and 152 to 172; these read FLLVFLGSGLLVGGLGVVLLP, PIFSAFSLGFVLVCISLLYIL, AQLLIYVGAINVLIIFAVMFM, LWTVGDGITSLVCTTILFSLI, and FFLPFELISIILLVALVGAIS.

The protein belongs to the complex I subunit 6 family. NDH is composed of at least 16 different subunits, 5 of which are encoded in the nucleus.

Its subcellular location is the plastid. The protein resides in the chloroplast thylakoid membrane. The enzyme catalyses a plastoquinone + NADH + (n+1) H(+)(in) = a plastoquinol + NAD(+) + n H(+)(out). It catalyses the reaction a plastoquinone + NADPH + (n+1) H(+)(in) = a plastoquinol + NADP(+) + n H(+)(out). Its function is as follows. NDH shuttles electrons from NAD(P)H:plastoquinone, via FMN and iron-sulfur (Fe-S) centers, to quinones in the photosynthetic chain and possibly in a chloroplast respiratory chain. The immediate electron acceptor for the enzyme in this species is believed to be plastoquinone. Couples the redox reaction to proton translocation, and thus conserves the redox energy in a proton gradient. The polypeptide is NAD(P)H-quinone oxidoreductase subunit 6, chloroplastic (ndhG) (Lobularia maritima (Sweet alyssum)).